Reading from the N-terminus, the 172-residue chain is ATP-dependent kinase-like protein notR' (172 aa).

It belongs to the YFH7 family.

ATP-dependent kinase-like protein; part of the gene cluster that mediates the biosynthesis of notoamide, a fungal indole alkaloid that belongs to a family of natural products containing a characteristic bicyclo[2.2.2]diazaoctane core. The first step of notoamide biosynthesis involves coupling of L-proline and L-tryptophan by the bimodular NRPS notE', to produce cyclo-L-tryptophan-L-proline called brevianamide F. The reverse prenyltransferase notF' then acts as a deoxybrevianamide E synthase and converts brevianamide F to deoxybrevianamide E via reverse prenylation at C-2 of the indole ring leading to the bicyclo[2.2.2]diazaoctane core. Deoxybrevianamide E is further hydroxylated at C-6 of the indole ring, likely catalyzed by the cytochrome P450 monooxygenase notG', to yield 6-hydroxy-deoxybrevianamide E. 6-hydroxy-deoxybrevianamide E is a specific substrate of the prenyltransferase notC' for normal prenylation at C-7 to produce 6-hydroxy-7-prenyl-deoxybrevianamide, also called notoamide S. As the proposed pivotal branching point in notoamide biosynthesis, notoamide S can be diverted to notoamide E through an oxidative pyran ring closure putatively catalyzed by either notH' cytochrome P450 monooxygenase or the notD' FAD-linked oxidoreductase. This step would be followed by an indole 2,3-epoxidation-initiated pinacol-like rearrangement catalyzed by the notB' FAD-dependent monooxygenase leading to the formation of notoamide C and notoamide D. On the other hand notoamide S is converted to notoamide T by notH' (or notD'), a bifunctional oxidase that also functions as the intramolecular Diels-Alderase responsible for generation of (-)-notoamide T. To generate antipodal (+)-notoaminide T, notH (or notD) in Aspergillus strain MF297-2 is expected to catalyze a Diels-Alder reaction leading to the opposite stereochemistry. The remaining oxidoreductase notD' (or notH') likely catalyzes the oxidative pyran ring formation to yield (-)-stephacidin A. The FAD-dependent monooxygenase notI' is highly similar to notB' and is predicted to catalyze a similar conversion from (-)-stephacidin A to (+)-notoamide B via the 2,3-epoxidation of (-)-stephacidin A followed by a pinacol-type rearrangement. Finally, it remains unclear which enzyme could be responsible for the final hydroxylation steps leading to notoamide A and sclerotiamide. The function of notQ' in the notoamide biosynthesis has not been determined yet. The protein is ATP-dependent kinase-like protein notR' of Aspergillus versicolor.